A 486-amino-acid polypeptide reads, in one-letter code: Beta-barrel assembly-enhancing protease (486 aa).

The signal sequence occupies residues M1–A19. H134 is a Zn(2+) binding site. The active site involves E135. The Zn(2+) site is built by H138 and E199. D203 acts as the Proton donor in catalysis.

It belongs to the peptidase M48 family. BepA subfamily. Zn(2+) serves as cofactor.

Its subcellular location is the periplasm. Its function is as follows. Functions both as a chaperone and a metalloprotease. Maintains the integrity of the outer membrane by promoting either the assembly or the elimination of outer membrane proteins, depending on their folding state. The chain is Beta-barrel assembly-enhancing protease from Yersinia pestis.